A 433-amino-acid polypeptide reads, in one-letter code: Monodehydroascorbate reductase (433 aa).

FAD is bound by residues 12–15 (GGVS), E39, R46, K51, I94, and 145–146 (RE). Residues 170-176 (GGYIGLE), E194, R200, and G259 contribute to the NAD(+) site. 172–176 (YIGLE) lines the NADP(+) pocket. NADP(+) is bound by residues R200 and G259. An FAD-binding site is contributed by D296. An NAD(+)-binding site is contributed by 312 to 313 (EH). An NADP(+)-binding site is contributed by 312–313 (EH). V314 contacts FAD. Residue R318 participates in L-ascorbate binding. Y347 serves as a coordination point for FAD. Y347 lines the NAD(+) pocket. Y347 contributes to the NADP(+) binding site. Residue R349 participates in L-ascorbate binding.

It belongs to the FAD-dependent oxidoreductase family. FAD is required as a cofactor. As to expression, expressed at relatively low levels in all tissues examined.

The protein localises to the cytoplasm. The catalysed reaction is 2 monodehydro-L-ascorbate radical + NADH + H(+) = 2 L-ascorbate + NAD(+). Its function is as follows. Catalyzes the conversion of monodehydroascorbate to ascorbate, oxidizing NADH in the process. In Pisum sativum (Garden pea), this protein is Monodehydroascorbate reductase.